A 167-amino-acid chain; its full sequence is Transcription initiation factor TFIID subunit 10 (167 aa).

Disordered regions lie at residues 1 to 56 (MASD…EESE) and 119 to 139 (TTNI…NPKD). The segment covering 41-56 (EQPDVEEVPLTTEESE) has biased composition (acidic residues). Basic and acidic residues predominate over residues 130–139 (SSKDKKNPKD).

The protein belongs to the TAF10 family. As to quaternary structure, belongs to the TFIID complex which is composed of TATA binding protein (Tbp) and a number of TBP-associated factors (TAFs). Also a member of the histone acetylase (HAT) complex. In terms of tissue distribution, at embryonic stage 9, highest expression is detected within the ectoderm, ventral chord, and anterior foregut primordium. Later in development preferential expression is in the foregut, proventriculus, and central nervous system. Coexpressed with Taf10b in the lateral epidermis and anal plate.

Its subcellular location is the cytoplasm. It localises to the nucleus. Its function is as follows. TFIID is a multimeric protein complex that plays a central role in mediating promoter responses to various activators and repressors. In Drosophila melanogaster (Fruit fly), this protein is Transcription initiation factor TFIID subunit 10.